Consider the following 303-residue polypeptide: uncharacterized protein (303 aa).

One can recognise an S4 RNA-binding domain in the interval 15 to 74 (ERIDKFLASTENDWSRTQVQQWVKDGQVVVNGSAVKANYKIQPGDQVTVTVPEPEALDVL). D138 is an active-site residue.

It belongs to the pseudouridine synthase RluA family.

It carries out the reaction a uridine in RNA = a pseudouridine in RNA. This is an uncharacterized protein from Bacillus subtilis (strain 168).